The chain runs to 155 residues: S-ribosylhomocysteine lyase (155 aa).

Fe cation is bound by residues histidine 54, histidine 58, and cysteine 122.

Belongs to the LuxS family. In terms of assembly, homodimer. Fe cation serves as cofactor.

It carries out the reaction S-(5-deoxy-D-ribos-5-yl)-L-homocysteine = (S)-4,5-dihydroxypentane-2,3-dione + L-homocysteine. Its function is as follows. Involved in the synthesis of autoinducer 2 (AI-2) which is secreted by bacteria and is used to communicate both the cell density and the metabolic potential of the environment. The regulation of gene expression in response to changes in cell density is called quorum sensing. Catalyzes the transformation of S-ribosylhomocysteine (RHC) to homocysteine (HC) and 4,5-dihydroxy-2,3-pentadione (DPD). The sequence is that of S-ribosylhomocysteine lyase from Deinococcus geothermalis (strain DSM 11300 / CIP 105573 / AG-3a).